The sequence spans 355 residues: Uroporphyrinogen decarboxylase (355 aa).

Residues 36-40 (RQAGR), Asp-85, Tyr-160, Ser-215, and His-334 each bind substrate.

The protein belongs to the uroporphyrinogen decarboxylase family. Homodimer.

Its subcellular location is the cytoplasm. It carries out the reaction uroporphyrinogen III + 4 H(+) = coproporphyrinogen III + 4 CO2. It functions in the pathway porphyrin-containing compound metabolism; protoporphyrin-IX biosynthesis; coproporphyrinogen-III from 5-aminolevulinate: step 4/4. Functionally, catalyzes the decarboxylation of four acetate groups of uroporphyrinogen-III to yield coproporphyrinogen-III. The polypeptide is Uroporphyrinogen decarboxylase (Rhodococcus erythropolis (strain PR4 / NBRC 100887)).